Consider the following 218-residue polypeptide: Small ribosomal subunit protein uS3c (218 aa).

The 72-residue stretch at V47–L118 folds into the KH type-2 domain.

Belongs to the universal ribosomal protein uS3 family. Part of the 30S ribosomal subunit.

The protein localises to the plastid. It is found in the chloroplast. The polypeptide is Small ribosomal subunit protein uS3c (rps3) (Angiopteris evecta (Mule's foot fern)).